Here is a 608-residue protein sequence, read N- to C-terminus: Prolactin receptor (608 aa).

An N-terminal signal peptide occupies residues 1 to 19 (MSSALAYMLLVLSISLLNG). Topologically, residues 20 to 229 (QSPPGKPEIH…EIPNDFTLKD (210 aa)) are extracellular. Fibronectin type-III domains lie at 22–122 (PPGK…IVEP) and 124–224 (PPRN…IPND). C31 and C41 are joined by a disulfide. N54 is a glycosylation site (N-linked (GlcNAc...) asparagine). A disulfide bond links C70 and C81. Residues N99 and N127 are each glycosylated (N-linked (GlcNAc...) asparagine). Zn(2+) contacts are provided by D206 and H207. Positions 210-214 (WSRWG) match the WSXWS motif motif. Residues 230-253 (TTVWIIVAVLSAVICLIMVWAVAL) form a helical membrane-spanning segment. The Cytoplasmic segment spans residues 254–608 (KGYSMMTCIF…DPTCFMHSFH (355 aa)). The Box 1 motif motif lies at 262–270 (IFPPVPGPK). 3 disordered regions span residues 317–355 (DERLMPSHSKEYPGQGVKPTHLDPDSDSGHGSYDSHSLL), 377–419 (KPEN…TRRS), and 466–487 (GAKSFPSDKQNTSWPPLQEKGP). Basic and acidic residues predominate over residues 318 to 327 (ERLMPSHSKE). The segment covering 345-354 (GHGSYDSHSL) has biased composition (low complexity). Over residues 398–408 (CHTDTSKSTTW) the composition is skewed to polar residues.

This sequence belongs to the type I cytokine receptor family. Type 1 subfamily. In terms of assembly, interacts with SMARCA1. Interacts with NEK3 and VAV2 and this interaction is prolactin-dependent.

The protein localises to the membrane. In terms of biological role, this is a receptor for the anterior pituitary hormone prolactin. This Mus musculus (Mouse) protein is Prolactin receptor (Prlr).